The primary structure comprises 642 residues: Threonine--tRNA ligase (642 aa).

One can recognise a TGS domain in the interval Met1–Thr61. The segment at Asp243–Pro534 is catalytic. 3 residues coordinate Zn(2+): Cys334, His385, and His511.

It belongs to the class-II aminoacyl-tRNA synthetase family. In terms of assembly, homodimer. Requires Zn(2+) as cofactor.

The protein localises to the cytoplasm. The catalysed reaction is tRNA(Thr) + L-threonine + ATP = L-threonyl-tRNA(Thr) + AMP + diphosphate + H(+). In terms of biological role, catalyzes the attachment of threonine to tRNA(Thr) in a two-step reaction: L-threonine is first activated by ATP to form Thr-AMP and then transferred to the acceptor end of tRNA(Thr). Also edits incorrectly charged L-seryl-tRNA(Thr). In Shewanella sediminis (strain HAW-EB3), this protein is Threonine--tRNA ligase.